We begin with the raw amino-acid sequence, 360 residues long: Serine/threonine-protein phosphatase 2A activator 2 (360 aa).

This sequence belongs to the PTPA-type PPIase family.

It localises to the cytoplasm. The catalysed reaction is [protein]-peptidylproline (omega=180) = [protein]-peptidylproline (omega=0). In terms of biological role, PPIases accelerate the folding of proteins. It catalyzes the cis-trans isomerization of proline imidic peptide bonds in oligopeptides. Acts as a regulatory subunit for PP2A-like phosphatases modulating their activity or substrate specificity, probably by inducing a conformational change in the catalytic subunit, a direct target of the PPIase. Can reactivate inactive phosphatase PP2A-phosphatase methylesterase complexes (PP2Ai) in presence of ATP and Mg(2+) by dissociating the inactive form from the complex. This chain is Serine/threonine-protein phosphatase 2A activator 2 (RRD2), found in Kluyveromyces lactis (strain ATCC 8585 / CBS 2359 / DSM 70799 / NBRC 1267 / NRRL Y-1140 / WM37) (Yeast).